A 117-amino-acid chain; its full sequence is Immunoglobulin heavy variable 5-51 (117 aa).

Positions 1–19 are cleaved as a signal peptide; sequence MGSTAILALLLAVLQGVCA. Residues 20–44 are framework-1; the sequence is EVQLVQSGAEVKKPGESLKISCKGS. An Ig-like domain is found at 20–117; it reads EVQLVQSGAE…SDTAMYYCAR (98 aa). A disulfide bridge links cysteine 41 with cysteine 115. Residues 45–52 form a complementarity-determining-1 region; it reads GYSFTSYW. The interval 53 to 69 is framework-2; sequence IGWVRQMPGKGLEWMGI. A complementarity-determining-2 region spans residues 70-77; that stretch reads IYPGDSDT. Residues 78-115 are framework-3; it reads RYSPSFQGQVTISADKSISTAYLQWSSLKASDTAMYYC. The interval 116-117 is complementarity-determining-3; sequence AR.

In terms of assembly, immunoglobulins are composed of two identical heavy chains and two identical light chains; disulfide-linked.

The protein resides in the secreted. It localises to the cell membrane. Functionally, v region of the variable domain of immunoglobulin heavy chains that participates in the antigen recognition. Immunoglobulins, also known as antibodies, are membrane-bound or secreted glycoproteins produced by B lymphocytes. In the recognition phase of humoral immunity, the membrane-bound immunoglobulins serve as receptors which, upon binding of a specific antigen, trigger the clonal expansion and differentiation of B lymphocytes into immunoglobulins-secreting plasma cells. Secreted immunoglobulins mediate the effector phase of humoral immunity, which results in the elimination of bound antigens. The antigen binding site is formed by the variable domain of one heavy chain, together with that of its associated light chain. Thus, each immunoglobulin has two antigen binding sites with remarkable affinity for a particular antigen. The variable domains are assembled by a process called V-(D)-J rearrangement and can then be subjected to somatic hypermutations which, after exposure to antigen and selection, allow affinity maturation for a particular antigen. The protein is Immunoglobulin heavy variable 5-51 of Homo sapiens (Human).